Consider the following 21-residue polypeptide: Hemolymph 65 kDa lectin BG04 (21 aa).

As to expression, hemolymph.

The protein resides in the secreted. Binds and precipitates antigens of the parasite Echinostoma paraensei. The sequence is that of Hemolymph 65 kDa lectin BG04 (BG04) from Biomphalaria glabrata (Bloodfluke planorb).